The following is a 279-amino-acid chain: uncharacterized protein (279 aa).

The HTH rpiR-type domain maps to 1–77 (MGILEQLENP…VTLAKEISNK (77 aa)). The H-T-H motif DNA-binding region spans 37-56 (ISIIAKESGVGEATITRFTK). The region spanning 123-263 (CRDLIMNAKR…YTEVIKEMFS (141 aa)) is the SIS domain.

This is an uncharacterized protein from Clostridium perfringens (strain 13 / Type A).